Reading from the N-terminus, the 247-residue chain is UPF0259 membrane protein BUsg_265 (247 aa).

6 helical membrane passes run 20–40 (IKIIIFISVLAAFISILINVL), 82–102 (IFKIFEFLISKTFLLGSIITL), 114–134 (IQFSLNSLCKFLPSLFILNFI), 137–157 (FFIQIGFMFFIFPGIFLSVLL), 188–208 (IVGTSVLFWMCVKFILTTVFS), and 217–237 (FIFLILNINMNIFFSILIVYL).

Belongs to the UPF0259 family.

The protein localises to the cell membrane. The polypeptide is UPF0259 membrane protein BUsg_265 (Buchnera aphidicola subsp. Schizaphis graminum (strain Sg)).